A 602-amino-acid polypeptide reads, in one-letter code: MNANNLLQAAIFIVVLIAAAVPVARYLTRVMDGSSAVVRVFGPLERALYRLAGIDPLTEMSWKQYALATVAFNALGVLFLYALLRVQGWLPGNPQGFGPMTVDGALNTAVSFVTNTNWQDYTPEQTVSYLAQMLGLTVQNFLSAATGIVVVLALIRGFARHTAQTIGNFWVDVTRVTLYVLVPMAAIIAALLMSQGVIQNTKAYQDVPTLQTTSYAAPRLDAQGNPVKDAKGNPVTVQTSVKAQTLAMGPVASQEAIKMLGTNGGGFFNGNSSHPYENPTPFSNFLEIFAILIIPAALCLVFGNTIGDRRQGVAVLAAMTVALAAAIGIETSAEQGGTPVLASLNVDQAASPLQAGGNMEGKETRFGIAQTGLFVVATTAASCGAVDAMHDSLTPVGGLVPMLLMQLGEVIFGGVGSGLYGMLVFALLAVFVAGLMIGRTPEYVGKKIESYEMKMVSIVVLLTPLLVLVGTSIAVLADAGRAGIANPGPHGFSEILYAFSSAANNNGSAFGGLSVNTPFYNWMTAIAMWFGRFGTIVPVLAIAGSLAAKKRIAATSGTLPTHGPLFVVLLLGTVLLVGALTYMPALALGPGVEHLMLFVGAH.

10 helical membrane passes run 3 to 23 (ANNLLQAAIFIVVLIAAAVPV), 64 to 84 (QYALATVAFNALGVLFLYALL), 135 to 155 (GLTVQNFLSAATGIVVVLALI), 178 to 198 (LYVLVPMAAIIAALLMSQGVI), 282 to 302 (FSNFLEIFAILIIPAALCLVF), 313 to 333 (VAVLAAMTVALAAAIGIETSA), 418 to 438 (GLYGMLVFALLAVFVAGLMIG), 456 to 476 (VSIVVLLTPLLVLVGTSIAVL), 522 to 542 (WMTAIAMWFGRFGTIVPVLAI), and 565 to 585 (LFVVLLLGTVLLVGALTYMPA).

The protein belongs to the KdpA family. The system is composed of three essential subunits: KdpA, KdpB and KdpC.

Its subcellular location is the cell inner membrane. Part of the high-affinity ATP-driven potassium transport (or Kdp) system, which catalyzes the hydrolysis of ATP coupled with the electrogenic transport of potassium into the cytoplasm. This subunit binds the periplasmic potassium ions and delivers the ions to the membrane domain of KdpB through an intramembrane tunnel. This chain is Potassium-transporting ATPase potassium-binding subunit, found in Burkholderia mallei (strain ATCC 23344).